Reading from the N-terminus, the 144-residue chain is uncharacterized protein (144 aa).

An N-terminal signal peptide occupies residues 1 to 22 (MCTDVAFFSLDCLATWLGGVCS).

This is an uncharacterized protein from Saccharomyces cerevisiae (strain ATCC 204508 / S288c) (Baker's yeast).